We begin with the raw amino-acid sequence, 269 residues long: Transmembrane protein 41B (269 aa).

6 helical membrane passes run 30–50, 87–107, 125–147, 175–195, 203–223, and 240–260; these read TSLL…FLVY, FYVQ…TFAI, LALF…LSYL, LINY…FINI, PLKV…FVAI, and SWNS…PALF. Residues 118–229 form a VTT domain; required for its function in autophagy region; that stretch reads GFLYPFPLAL…FVAIKAGTTL (112 aa).

Belongs to the TMEM41 family.

The protein localises to the endoplasmic reticulum membrane. It localises to the endomembrane system. It catalyses the reaction a 1,2-diacyl-sn-glycero-3-phospho-L-serine(in) = a 1,2-diacyl-sn-glycero-3-phospho-L-serine(out). The enzyme catalyses cholesterol(in) = cholesterol(out). It carries out the reaction a 1,2-diacyl-sn-glycero-3-phosphocholine(in) = a 1,2-diacyl-sn-glycero-3-phosphocholine(out). The catalysed reaction is a 1,2-diacyl-sn-glycero-3-phosphoethanolamine(in) = a 1,2-diacyl-sn-glycero-3-phosphoethanolamine(out). Phospholipid scramblase involved in lipid homeostasis and membrane dynamics processes. Has phospholipid scramblase activity toward cholesterol and phosphatidylserine, as well as phosphatidylethanolamine and phosphatidylcholine. Required for autophagosome formation: participates in early stages of autophagosome biogenesis at the endoplasmic reticulum (ER) membrane by reequilibrating the leaflets of the ER as lipids are extracted by ATG2 (ATG2A or ATG2B) to mediate autophagosome assembly. In addition to autophagy, involved in other processes in which phospholipid scramblase activity is required. Required for normal motor neuron development. The sequence is that of Transmembrane protein 41B from Gallus gallus (Chicken).